The primary structure comprises 410 residues: Peptidase T-like protein YPO1009/y3403/YP_3421 (410 aa).

H82 is a binding site for Zn(2+). D84 is a catalytic residue. D144 is a binding site for Zn(2+). E176 functions as the Proton acceptor in the catalytic mechanism. Zn(2+)-binding residues include E177, D200, and H382.

Belongs to the peptidase M20B family. It depends on Zn(2+) as a cofactor.

This Yersinia pestis protein is Peptidase T-like protein YPO1009/y3403/YP_3421.